The primary structure comprises 396 residues: MTSRSTEKSAAANPAAVSKTPSPDRIRRAPKVLLHDHLDGGLRPGTIVELARETGYGDLPETDADLLGTWFRQAADSGSLERYLETFSHTVGVMQTRDALVRVAAECAEDLAEDGVVYAEVRYAPEQHLEKGLTLEEVVEAVNEGFREGERRARDNGHRIRVGALLTAMRHAARSLEIAELANRYRDLGVVGFDIAGAEAGYPPTRHLDAFEYLKRENNHFTIHAGEAFGLPSIWQALQWCGADRLGHGVRIIDDIQVHEDGSVKLGRLASYVRDKRIPLELCPSSNLQTGAADSYAEHPIGLLRRLHFRATVNTDNRLMSHTSMSREFEHLVEAFGYTLDDMQWFSVNAMKSAFIPFDERLAMINDVIKPGYAELKSEWLFQQTASTSGSSESDG.

The disordered stretch occupies residues 1 to 26 (MTSRSTEKSAAANPAAVSKTPSPDRI). Zn(2+) is bound by residues His-35 and His-37. The substrate site is built by His-37, Asp-39, and Gly-197. Position 224 (His-224) interacts with Zn(2+). The Proton donor role is filled by Glu-227. Asp-316 contacts Zn(2+).

This sequence belongs to the metallo-dependent hydrolases superfamily. Adenosine and AMP deaminases family. Adenosine deaminase subfamily. As to quaternary structure, homotetramer. The cofactor is Zn(2+).

It carries out the reaction adenosine + H2O + H(+) = inosine + NH4(+). It catalyses the reaction 2'-deoxyadenosine + H2O + H(+) = 2'-deoxyinosine + NH4(+). With respect to regulation, coformycin and 2'-deoxycoformycin, whose structures mimic the transition state of the deamination reaction, are potent competitive inhibitors. Functionally, catalyzes the hydrolytic deamination of adenosine and 2-deoxyadenosine. This is Adenosine deaminase 1 from Streptomyces coelicolor (strain ATCC BAA-471 / A3(2) / M145).